Consider the following 414-residue polypeptide: Serine hydroxymethyltransferase (414 aa).

Residues Leu-121 and Gly-125–Leu-127 contribute to the (6S)-5,6,7,8-tetrahydrofolate site. Lys-229 is subject to N6-(pyridoxal phosphate)lysine.

Belongs to the SHMT family. Homodimer. The cofactor is pyridoxal 5'-phosphate.

The protein localises to the cytoplasm. It catalyses the reaction (6R)-5,10-methylene-5,6,7,8-tetrahydrofolate + glycine + H2O = (6S)-5,6,7,8-tetrahydrofolate + L-serine. It participates in one-carbon metabolism; tetrahydrofolate interconversion. It functions in the pathway amino-acid biosynthesis; glycine biosynthesis; glycine from L-serine: step 1/1. Catalyzes the reversible interconversion of serine and glycine with tetrahydrofolate (THF) serving as the one-carbon carrier. This reaction serves as the major source of one-carbon groups required for the biosynthesis of purines, thymidylate, methionine, and other important biomolecules. Also exhibits THF-independent aldolase activity toward beta-hydroxyamino acids, producing glycine and aldehydes, via a retro-aldol mechanism. This is Serine hydroxymethyltransferase from Polynucleobacter asymbioticus (strain DSM 18221 / CIP 109841 / QLW-P1DMWA-1) (Polynucleobacter necessarius subsp. asymbioticus).